Here is a 92-residue protein sequence, read N- to C-terminus: MTRSLKKNPFVANHLLKKIDKLNTKAEKEIIVTWSRASTIIPTMIGHTIAIHNGKEHLPIYITDSMVGHKLGEFAPTLNFRGHAKSDNRSRR.

This sequence belongs to the universal ribosomal protein uS19 family.

The protein localises to the plastid. The protein resides in the chloroplast. Protein S19 forms a complex with S13 that binds strongly to the 16S ribosomal RNA. This chain is Small ribosomal subunit protein uS19c, found in Nicotiana sylvestris (Wood tobacco).